The primary structure comprises 299 residues: MVGKARSSNFTLSEKLDLLKLVKPYVKILEEHTNKHSVIVEKNRCWDIIAVNYNAIGVDRPPRTAQGLRTLYKRLKEYAKQELLQQKETQSDFKSNISEPTKKVMEMIPQISSFCLVRDRNHIQSANLDEEAQAGTSSLQVMLDHHPVAITVEVKQEEDIKPPPPLVLNSQQSDTLEQREEHELVHVMERSLSPSLSSVDMRMTSSPSSIPRRDDFFRHESGEHFRSLLGYDPQILQMLKEEHQIILENQKNFGLYVQEKRDGLKRRQQLEEELLRAKIEVEKLKAIRLRHDLPEYNSL.

Lys-94 participates in a covalent cross-link: Glycyl lysine isopeptide (Lys-Gly) (interchain with G-Cter in SUMO2).

Interacts with APBA1 (via PDZ 1 and 2 domains). In terms of tissue distribution, expressed in multiple tissues including brain.

It localises to the nucleus. Transcriptional repressor that down-regulates the expression of the fibrinogen gamma chain. Represses transcription of GSK3B gene promoter via its interaction with APBA1. In Homo sapiens (Human), this protein is Fibrinogen silencer-binding protein (FSBP).